Consider the following 404-residue polypeptide: MAKSVLKAAPVVVGLTALMERHADALSSQLQAHHLKVFPPHSEKGIRTFGPSEASKLLGVGESYLRQTASEMPELNVSMSPGGRRMFSIEDIHVIRKYMDQVGRGNRRYLPHRRGGEQLQVISVMNFKGGSGKTTTAAHLAQYLAMRGYRVLAIDLDPQASLSALFGSQPETDVGPNETLYGAIRYDDEQVAIERVVRGTYIPDLHLIPGNLELMEFEHDTPRALMNRKEGDTLFYGRISQVIEDIADNYDVVVIDCPPQLGYLTLSALTAATSILVTVHPQMLDVMSMNQFLAMTSNLLREIENAGAKFKFNWMRYLITRFEPSDGPQNQMVGYLRSIFGENVLNFPMLKTTAVSDAGLTNQTLFEVERGLFTRSTYDRALEAMNAVNDEIETLIKKAWGRPT.

This protein is coded by a hairy root Ri plasmid. It is possibly involved in regulating the plasmid copy-number. The chain is Putative replication protein A (repA) from Rhizobium rhizogenes (Agrobacterium rhizogenes).